The primary structure comprises 308 residues: Porphobilinogen deaminase (308 aa).

S-(dipyrrolylmethanemethyl)cysteine is present on Cys240.

This sequence belongs to the HMBS family. As to quaternary structure, monomer. Dipyrromethane serves as cofactor.

The catalysed reaction is 4 porphobilinogen + H2O = hydroxymethylbilane + 4 NH4(+). It participates in porphyrin-containing compound metabolism; protoporphyrin-IX biosynthesis; coproporphyrinogen-III from 5-aminolevulinate: step 2/4. Its function is as follows. Tetrapolymerization of the monopyrrole PBG into the hydroxymethylbilane pre-uroporphyrinogen in several discrete steps. This is Porphobilinogen deaminase from Laribacter hongkongensis (strain HLHK9).